The following is a 456-amino-acid chain: Probable glycine dehydrogenase (decarboxylating) subunit 1 (456 aa).

Belongs to the GcvP family. N-terminal subunit subfamily. The glycine cleavage system is composed of four proteins: P, T, L and H. In this organism, the P 'protein' is a heterodimer of two subunits.

The enzyme catalyses N(6)-[(R)-lipoyl]-L-lysyl-[glycine-cleavage complex H protein] + glycine + H(+) = N(6)-[(R)-S(8)-aminomethyldihydrolipoyl]-L-lysyl-[glycine-cleavage complex H protein] + CO2. The glycine cleavage system catalyzes the degradation of glycine. The P protein binds the alpha-amino group of glycine through its pyridoxal phosphate cofactor; CO(2) is released and the remaining methylamine moiety is then transferred to the lipoamide cofactor of the H protein. The chain is Probable glycine dehydrogenase (decarboxylating) subunit 1 from Legionella pneumophila subsp. pneumophila (strain Philadelphia 1 / ATCC 33152 / DSM 7513).